A 573-amino-acid polypeptide reads, in one-letter code: Acetolactate synthase large subunit (573 aa).

Glu-51 contacts thiamine diphosphate. FAD is bound by residues Arg-153, 261 to 282 (HGTL…IGVR), and 304 to 323 (DIDP…IVGN). The thiamine pyrophosphate binding stretch occupies residues 396-476 (QHQMFAALHY…VVIICLNNHF (81 aa)). Mg(2+)-binding residues include Asp-447 and Asn-474.

This sequence belongs to the TPP enzyme family. In terms of assembly, dimer of large and small chains. Mg(2+) serves as cofactor. The cofactor is thiamine diphosphate.

It catalyses the reaction 2 pyruvate + H(+) = (2S)-2-acetolactate + CO2. It functions in the pathway amino-acid biosynthesis; L-isoleucine biosynthesis; L-isoleucine from 2-oxobutanoate: step 1/4. The protein operates within amino-acid biosynthesis; L-valine biosynthesis; L-valine from pyruvate: step 1/4. The protein is Acetolactate synthase large subunit (ilvI) of Haemophilus influenzae (strain ATCC 51907 / DSM 11121 / KW20 / Rd).